A 356-amino-acid chain; its full sequence is Phosphatidylglycerol--prolipoprotein diacylglyceryl transferase (356 aa).

4 helical membrane-spanning segments follow: residues 24–44, 59–79, 103–123, and 144–164; these read IKWYGIFITVGFVLAIILACV, WFVFIGIPVSLLGARIWSFII, LAIEGGVLLTVIAALIYFPLV, and VSMWVYADAIVPCILVGQIIG. Arginine 165 lines the a 1,2-diacyl-sn-glycero-3-phospho-(1'-sn-glycerol) pocket. 2 helical membrane passes run 209–229 and 265–285; these read PFFLYESFINFWFFLAIYIGG and FATSIVMSVLFALFGIILLVC.

It belongs to the Lgt family.

The protein localises to the cell membrane. It catalyses the reaction L-cysteinyl-[prolipoprotein] + a 1,2-diacyl-sn-glycero-3-phospho-(1'-sn-glycerol) = an S-1,2-diacyl-sn-glyceryl-L-cysteinyl-[prolipoprotein] + sn-glycerol 1-phosphate + H(+). Its pathway is protein modification; lipoprotein biosynthesis (diacylglyceryl transfer). Its function is as follows. Catalyzes the transfer of the diacylglyceryl group from phosphatidylglycerol to the sulfhydryl group of the N-terminal cysteine of a prolipoprotein, the first step in the formation of mature lipoproteins. This chain is Phosphatidylglycerol--prolipoprotein diacylglyceryl transferase, found in Malacoplasma penetrans (strain HF-2) (Mycoplasma penetrans).